We begin with the raw amino-acid sequence, 178 residues long: MALNLSQKQEVVAELADIAAKAHSLIAAEYAGTTVAQMTAMRKQARETGVFLKVVKNTLASRAVEGTEFAVAQDQMVGPLLYAFSLEEPGAAGRLIKEAAKGNDKLKAKVVAIGGEVFPASHVDVLASLPTRDQALAMLARVLTEPVTMFARAIKAIGDKQNGGDVAADAAEPAAETA.

This sequence belongs to the universal ribosomal protein uL10 family. As to quaternary structure, part of the ribosomal stalk of the 50S ribosomal subunit. The N-terminus interacts with L11 and the large rRNA to form the base of the stalk. The C-terminus forms an elongated spine to which L12 dimers bind in a sequential fashion forming a multimeric L10(L12)X complex.

Forms part of the ribosomal stalk, playing a central role in the interaction of the ribosome with GTP-bound translation factors. This chain is Large ribosomal subunit protein uL10, found in Stenotrophomonas maltophilia (strain R551-3).